We begin with the raw amino-acid sequence, 416 residues long: MENITLDELGNFTLTNLRKLAKEHKIEGYSTIPKMELLNRLCYSIATAEGLIYSYGELDIINETYGFLRNTPQNIDVYVSNSQIKKFGLRQGDVIVGEVRKPLNDEKNFGLLKLIYVNGEKGELSRQRPIFDDLTPSYPIERLELGEGTVSSRIIDLIAPIGKGQRGLIVAPPKAGKTTILSDLANDILKYNKDVQVWIILIDERPEEVTDIKENVKNAEIFAATFDENTSVHLSVTEKVLEAAKREIEKGNNIVILMDSLTRLARSYNIEMPSSGKLLSGGIDPKSLYMPKKFLGAARKIRGGGSLTILATALIETGSRMDEVIFEEFKGTGNMELVLDRALQQLRLFPAVDILKSGTRKEELLYSKREFDSILKLRKFLLKLNEAEALKFLMDLIKRYSSNKDLLENIDYELKL.

The Rho RNA-BD domain maps to 51 to 121 (LIYSYGELDI…LKLIYVNGEK (71 aa)). ATP-binding positions include 162-167 (GKGQRG), 174-179 (KAGKTT), and R205.

The protein belongs to the Rho family. In terms of assembly, homohexamer. The homohexamer assembles into an open ring structure.

Facilitates transcription termination by a mechanism that involves Rho binding to the nascent RNA, activation of Rho's RNA-dependent ATPase activity, and release of the mRNA from the DNA template. The chain is Transcription termination factor Rho from Streptobacillus moniliformis (strain ATCC 14647 / DSM 12112 / NCTC 10651 / 9901).